The following is a 259-amino-acid chain: MADSREENVYMAKLAEQAERYEEMVEFMEKVAKVDVEELTVEERNLLSVAYKNVIGARRASWRIISSIEQKEESRGNEDHVSSIKEYRVKIEAELSKICDGILSLLESHLVPSASTAESKVFYLKMKGDYHRYLAEFKTGARERKEAAENTLLAYKSAQDIALAELTPTHPIRLGLALNFSVFYYEILNSPDRACNLAKQAFDDAIAELDTLGEESYKDSTLIMQLLRDNLTLWTSDTTDDAEDEIREGSKQESGDGQQ.

Residues 237–259 are disordered; sequence DTTDDAEDEIREGSKQESGDGQQ. Over residues 247–259 the composition is skewed to basic and acidic residues; sequence REGSKQESGDGQQ.

The protein belongs to the 14-3-3 family. As to expression, leaves specific.

The sequence is that of 14-3-3-like protein from Solanum tuberosum (Potato).